The chain runs to 392 residues: Formate-dependent phosphoribosylglycinamide formyltransferase (392 aa).

N(1)-(5-phospho-beta-D-ribosyl)glycinamide contacts are provided by residues Glu15–Leu16 and Glu75. Residues Arg107, Lys148, Ser153–Gln158, Glu188–Leu191, and Glu196 each bind ATP. Residues Asp112–Leu302 enclose the ATP-grasp domain. Positions 261 and 273 each coordinate Mg(2+). Residues Asp280, Lys350, and Arg357–Arg358 contribute to the N(1)-(5-phospho-beta-D-ribosyl)glycinamide site.

Belongs to the PurK/PurT family. In terms of assembly, homodimer.

The enzyme catalyses N(1)-(5-phospho-beta-D-ribosyl)glycinamide + formate + ATP = N(2)-formyl-N(1)-(5-phospho-beta-D-ribosyl)glycinamide + ADP + phosphate + H(+). The protein operates within purine metabolism; IMP biosynthesis via de novo pathway; N(2)-formyl-N(1)-(5-phospho-D-ribosyl)glycinamide from N(1)-(5-phospho-D-ribosyl)glycinamide (formate route): step 1/1. Functionally, involved in the de novo purine biosynthesis. Catalyzes the transfer of formate to 5-phospho-ribosyl-glycinamide (GAR), producing 5-phospho-ribosyl-N-formylglycinamide (FGAR). Formate is provided by PurU via hydrolysis of 10-formyl-tetrahydrofolate. The protein is Formate-dependent phosphoribosylglycinamide formyltransferase of Synechococcus sp. (strain CC9605).